The chain runs to 123 residues: Large ribosomal subunit protein uL14 (123 aa).

This sequence belongs to the universal ribosomal protein uL14 family. In terms of assembly, part of the 50S ribosomal subunit. Forms a cluster with proteins L3 and L19. In the 70S ribosome, L14 and L19 interact and together make contacts with the 16S rRNA in bridges B5 and B8.

Binds to 23S rRNA. Forms part of two intersubunit bridges in the 70S ribosome. The sequence is that of Large ribosomal subunit protein uL14 from Photorhabdus laumondii subsp. laumondii (strain DSM 15139 / CIP 105565 / TT01) (Photorhabdus luminescens subsp. laumondii).